Reading from the N-terminus, the 374-residue chain is Formylglycine-generating enzyme (374 aa).

A signal peptide spans Met-1–Gly-33. Cys-50 and Cys-52 are oxidised to a cystine. Residues Arg-57–Gly-102 are disordered. A Ca(2+)-binding site is contributed by Glu-130. A glycan (N-linked (GlcNAc...) asparagine) is linked at Asn-141. 2 disulfides stabilise this stretch: Cys-218–Cys-365 and Cys-235–Cys-346. Asn-259, Ile-260, Asp-273, Phe-275, Asn-293, Gly-296, Ala-298, and Glu-300 together coordinate Ca(2+). Cu(2+) is bound by residues Cys-336 and Cys-341. The segment at Cys-341–Asn-360 is interaction with sulfatases.

The protein belongs to the sulfatase-modifying factor family. Monomer, homodimer and heterodimer with SUMF2. It depends on Cu(2+) as a cofactor. N-glycosylated. Contains high-mannose-type oligosaccharides.

It is found in the endoplasmic reticulum lumen. It carries out the reaction L-cysteinyl-[sulfatase] + 2 a thiol + O2 = an organic disulfide + 3-oxo-L-alanyl-[sulfatase] + hydrogen sulfide + H2O + H(+). It functions in the pathway protein modification; sulfatase oxidation. Functionally, oxidase that catalyzes the conversion of cysteine to 3-oxoalanine on target proteins, using molecular oxygen and an unidentified reducing agent. 3-oxoalanine modification, which is also named formylglycine (fGly), occurs in the maturation of arylsulfatases and some alkaline phosphatases that use the hydrated form of 3-oxoalanine as a catalytic nucleophile. Known substrates include GALNS, ARSA, STS and ARSE. The sequence is that of Formylglycine-generating enzyme from Bos taurus (Bovine).